Reading from the N-terminus, the 138-residue chain is Thyrotropin subunit beta (138 aa).

An N-terminal signal peptide occupies residues 1-20 (MNAVVLFSVLFALACGQVSS). Disulfide bonds link C22-C72, C36-C87, C39-C125, C47-C103, C51-C105, and C108-C115. The N-linked (GlcNAc...) asparagine glycan is linked to N43. A propeptide spanning residues 133–138 (LGGFSG) is cleaved from the precursor.

The protein belongs to the glycoprotein hormones subunit beta family. Heterodimer of a common alpha chain and a unique beta chain which confers biological specificity to thyrotropin, lutropin, follitropin and gonadotropin.

The protein resides in the secreted. Functionally, indispensable for the control of thyroid structure and metabolism. This is Thyrotropin subunit beta (Tshb) from Rattus norvegicus (Rat).